The primary structure comprises 333 residues: Phosphate acyltransferase (333 aa).

It belongs to the PlsX family. As to quaternary structure, homodimer. Probably interacts with PlsY.

It is found in the cytoplasm. It carries out the reaction a fatty acyl-[ACP] + phosphate = an acyl phosphate + holo-[ACP]. Its pathway is lipid metabolism; phospholipid metabolism. In terms of biological role, catalyzes the reversible formation of acyl-phosphate (acyl-PO(4)) from acyl-[acyl-carrier-protein] (acyl-ACP). This enzyme utilizes acyl-ACP as fatty acyl donor, but not acyl-CoA. This is Phosphate acyltransferase from Thermoanaerobacterium thermosaccharolyticum (strain ATCC 7956 / DSM 571 / NCIMB 9385 / NCA 3814 / NCTC 13789 / WDCM 00135 / 2032) (Clostridium thermosaccharolyticum).